We begin with the raw amino-acid sequence, 953 residues long: Nucleotide-binding oligomerization domain-containing protein 1 (953 aa).

A CARD domain is found at 15–107 (GCHSHIKLLK…VDLRLWLSEI (93 aa)). Residues 196-531 (ETVFVFGDAG…AFFTAFFLVA (336 aa)) enclose the NACHT domain. 202 to 209 (GDAGVGKS) lines the ATP pocket. Residues Cys-558 and Cys-567 are each lipidated (S-palmitoyl cysteine). LRR repeat units lie at residues 702–725 (FHRQ…ELQP), 727–750 (FSRL…VLCE), 755–778 (YKIV…YVAQ), 783–806 (CRGL…CVAL), 839–862 (HPSL…SLAQ), 867–890 (NTTL…CFAE), 895–918 (NQTL…QLAR), and 923–946 (NTAI…VFEN). Cys-952 carries the S-palmitoyl cysteine lipid modification.

The protein belongs to the NOD1-NOD2 family. As to quaternary structure, homooligomer: homooligomerizes following ligand-binding, promoting RIPK2 recruitment. Interacts (via CARD domain) with RIPK2 (via CARD domain). Following RIPK2 recruitment, RIPK2 homooligomerizes via its CARD domain and forms long filaments named RIPosomes. Interacts (via CARD domain) with ubiquitin; inhibiting interaction with RIPK2. Interacts with ARHGEF2. Interacts with NLRP10 and recruits it to the cell membrane following invasive bacterial infection. Interacts with IFIH1; this interaction promotes transcription of antiviral genes and inhibition of viral replication. Interacts with Irgm1; promoting NOD1 degradation. Interacts with ATG16L1. In terms of processing, ubiquitinated. 'Lys-48'-linked polyubiquitination by RNF34 promotes proteasomal degradation and thereby negatively regulates NOD1 for instance in NF-kappa-B activation. Palmitoylated. Palmitoylation is required for proper recruitment to the bacterial entry site and hence for proper signaling upon cognate peptidoglycan detection. Post-translationally, degraded via selective autophagy following interaction with Irgm1. Irgm1 promotes NOD1-RIPK2 RIPosome recruitment to autophagosome membranes, promoting their SQSTM1/p62-dependent autophagic degradation. Although ubiquitously expressed, NOD1 levels are more abundant in immune cells, the gastrointestinal tract, and adipose tissue.

Its subcellular location is the cell membrane. It localises to the apical cell membrane. The protein localises to the basolateral cell membrane. The protein resides in the cytoplasm. In terms of biological role, pattern recognition receptor (PRR) that detects bacterial peptidoglycan fragments and other danger signals and thus participates in both innate and adaptive immune responses. Specifically recognizes and binds gamma-D-glutamyl-meso-diaminopimelic acid (iE-DAP), a dipeptide present in peptidoglycan of Gram-negative bacteria. Preferentially binds iE-DAP in tetrapeptide-containing muropeptides (MurNAc-TetraDAP or TetraDAP). Ligand binding triggers oligomerization that facilitates the binding and subsequent activation of the proximal adapter receptor-interacting RIPK2. Following recruitment, RIPK2 undergoes 'Met-1'- (linear) and 'Lys-63'-linked polyubiquitination by E3 ubiquitin-protein ligases XIAP, BIRC2, BIRC3 and the LUBAC complex, becoming a scaffolding protein for downstream effectors, triggering activation of the NF-kappa-B and MAP kinases signaling. This in turn leads to the transcriptional activation of hundreds of genes involved in immune response. Also acts as a regulator of antiviral response elicited by dsRNA and the expression of RLR pathway members by targeting IFIH1 and TRAF3 to modulate the formation of IFIH1-MAVS and TRAF3-MAVS complexes leading to increased transcription of type I IFNs. Also acts as a regulator of autophagy via its interaction with ATG16L1, possibly by recruiting ATG16L1 at the site of bacterial entry. Besides recognizing pathogens, also involved in the endoplasmic reticulum stress response: acts by sensing and binding to the cytosolic metabolite sphingosine-1-phosphate generated in response to endoplasmic reticulum stress, initiating an inflammation process that leads to activation of the NF-kappa-B and MAP kinases signaling. In addition, plays a role in insulin trafficking in beta cells in a cell-autonomous manner. Mechanistically, upon recognizing cognate ligands, NOD1 and RIPK2 localize to insulin vesicles where they recruit RAB1A to direct insulin trafficking through the cytoplasm. This chain is Nucleotide-binding oligomerization domain-containing protein 1, found in Mus musculus (Mouse).